A 106-amino-acid polypeptide reads, in one-letter code: Secreted RxLR effector protein 18 (106 aa).

The N-terminal stretch at 1–17 is a signal peptide; that stretch reads MRGSTAMLLAAIALFSS. The RxLR-dEER signature appears at 28–39; the sequence is RTLRSFEELEER.

It belongs to the RxLR effector family.

The protein resides in the secreted. It is found in the host cell. Its function is as follows. Effector that may act as a suppressor of cell death to interrupt plant immunity. I. The protein is Secreted RxLR effector protein 18 of Plasmopara viticola (Downy mildew of grapevine).